Reading from the N-terminus, the 288-residue chain is Proteasome assembly chaperone 1 (288 aa).

Positions 1–33 (MATFFGEVQSVFSRAVDEEEEDEDDDEEEEEDR) are disordered. A compositionally biased stretch (acidic residues) spans 17–33 (DEEEEDEDDDEEEEEDR).

Belongs to the PSMG1 family. Forms a heterodimer with psmg2. Degraded by the proteasome upon completion of 20S proteasome maturation.

The protein localises to the cytoplasm. It localises to the endoplasmic reticulum. Chaperone protein which promotes assembly of the 20S proteasome as part of a heterodimer with psmg2. This is Proteasome assembly chaperone 1 from Xenopus laevis (African clawed frog).